A 214-amino-acid polypeptide reads, in one-letter code: Probable chorismate pyruvate-lyase (214 aa).

Residues R74, L112, and E173 each contribute to the substrate site. The interval 183–214 is disordered; sequence AAPENTGAGGTRLPRRIDTHHTPSKQEERPES. Residues 197–214 show a composition bias toward basic and acidic residues; sequence RRIDTHHTPSKQEERPES.

Belongs to the UbiC family.

It localises to the cytoplasm. The enzyme catalyses chorismate = 4-hydroxybenzoate + pyruvate. The protein operates within cofactor biosynthesis; ubiquinone biosynthesis. Functionally, removes the pyruvyl group from chorismate, with concomitant aromatization of the ring, to provide 4-hydroxybenzoate (4HB) for the ubiquinone pathway. This Cupriavidus metallidurans (strain ATCC 43123 / DSM 2839 / NBRC 102507 / CH34) (Ralstonia metallidurans) protein is Probable chorismate pyruvate-lyase.